Here is a 93-residue protein sequence, read N- to C-terminus: Stromal cell-derived factor 1 (93 aa).

The signal sequence occupies residues 1-21; sequence MDIRTLALFSILLGSLCLSEG. A Receptor activation motif motif is present at residues 22 to 23; it reads KP. A receptor and heparin binding region spans residues 29–33; the sequence is RCPCR. Disulfide bonds link cysteine 30–cysteine 55 and cysteine 32–cysteine 71. Heparin contacts are provided by residues 41–51, arginine 62, glutamine 69, and lysine 85; that span reads KSNIKHLKILS. 2 receptor binding regions span residues 48 to 50 and 60 to 64; these read KIL and VARLK.

Belongs to the intercrine alpha (chemokine CxC) family. Monomer or homodimer; in equilibrium. Dimer formation is induced by non acidic pH and the presence of multivalent anions, and by binding to cxcr4 or heparin.

Its subcellular location is the secreted. Functionally, chemoattractant. Activates the C-X-C chemokine receptor cxcr4 to induce a rapid and transient rise in the level of intracellular calcium ions, and chemotaxis. Signaling with cxcr4 mediates the directional movement of mesodermal cells during gastrulation. Binds to the allosteric site (site 2) of integrins and activates them in a cxcr4-independent manner. In Xenopus tropicalis (Western clawed frog), this protein is Stromal cell-derived factor 1.